The primary structure comprises 323 residues: Beta-ketoacyl-[acyl-carrier-protein] synthase III (323 aa).

Residues C112 and H250 contribute to the active site. Residues 251 to 255 (QANQR) form an ACP-binding region. N280 is an active-site residue.

Belongs to the thiolase-like superfamily. FabH family. Homodimer.

The protein resides in the cytoplasm. It carries out the reaction malonyl-[ACP] + acetyl-CoA + H(+) = 3-oxobutanoyl-[ACP] + CO2 + CoA. Its pathway is lipid metabolism; fatty acid biosynthesis. In terms of biological role, catalyzes the condensation reaction of fatty acid synthesis by the addition to an acyl acceptor of two carbons from malonyl-ACP. Catalyzes the first condensation reaction which initiates fatty acid synthesis and may therefore play a role in governing the total rate of fatty acid production. Possesses both acetoacetyl-ACP synthase and acetyl transacylase activities. Its substrate specificity determines the biosynthesis of branched-chain and/or straight-chain of fatty acids. This chain is Beta-ketoacyl-[acyl-carrier-protein] synthase III, found in Oenococcus oeni (strain ATCC BAA-331 / PSU-1).